We begin with the raw amino-acid sequence, 206 residues long: tRNA(Phe) 7-((3-amino-3-carboxypropyl)-4-demethylwyosine(37)-N(4))-methyltransferase 2 (206 aa).

Belongs to the TYW3 family.

The enzyme catalyses 4-demethyl-7-[(3S)-3-amino-3-carboxypropyl]wyosine(37) in tRNA(Phe) + S-adenosyl-L-methionine = 7-[(3S)-3-amino-3-carboxypropyl]wyosine(37) in tRNA(Phe) + S-adenosyl-L-homocysteine + H(+). In terms of biological role, S-adenosyl-L-methionine-dependent methyltransferase that acts as a component of the wyosine derivatives biosynthesis pathway. Probably methylates N-4 position of wybutosine-86 to produce wybutosine-72. The protein is tRNA(Phe) 7-((3-amino-3-carboxypropyl)-4-demethylwyosine(37)-N(4))-methyltransferase 2 of Pyrococcus abyssi (strain GE5 / Orsay).